Here is a 429-residue protein sequence, read N- to C-terminus: ATP-dependent RNA helicase RhlB (429 aa).

A Q motif motif is present at residues 9-37 (DKFAQMGLEPEVLAGLESKGFHYCTPIQA). Residues 40–219 (LPLLVEGHDL…YEHMNHPEHV (180 aa)) enclose the Helicase ATP-binding domain. 53-60 (AQTGTGKT) serves as a coordination point for ATP. The short motif at 165–168 (DEAD) is the DEAD box element. Positions 243-390 (KMLLLLSLME…VSKYDREALL (148 aa)) constitute a Helicase C-terminal domain. The segment at 399–429 (VFRNRQPVNRNMRDRQGGGNSNNRRRPPRKS) is disordered.

This sequence belongs to the DEAD box helicase family. RhlB subfamily. In terms of assembly, component of the RNA degradosome, which is a multiprotein complex involved in RNA processing and mRNA degradation.

Its subcellular location is the cytoplasm. It carries out the reaction ATP + H2O = ADP + phosphate + H(+). DEAD-box RNA helicase involved in RNA degradation. Has RNA-dependent ATPase activity and unwinds double-stranded RNA. The polypeptide is ATP-dependent RNA helicase RhlB (Aeromonas hydrophila subsp. hydrophila (strain ATCC 7966 / DSM 30187 / BCRC 13018 / CCUG 14551 / JCM 1027 / KCTC 2358 / NCIMB 9240 / NCTC 8049)).